We begin with the raw amino-acid sequence, 210 residues long: Mediator of RNA polymerase II transcription subunit 20 (210 aa).

Belongs to the Mediator complex subunit 20 family. In terms of assembly, component of the Mediator complex, which is composed of at least 21 subunits that form three structurally distinct submodules. The Mediator head module contains MED6, MED8, MED11, SRB4/MED17, SRB5/MED18, ROX3/MED19, SRB2/MED20 and SRB6/MED22, the middle module contains MED1, MED4, NUT1/MED5, MED7, CSE2/MED9, NUT2/MED10, SRB7/MED21 and SOH1/MED31, and the tail module contains MED2, PGD1/MED3, RGR1/MED14, GAL11/MED15 and SIN4/MED16. The head and the middle modules interact directly with RNA polymerase II, whereas the elongated tail module interacts with gene-specific regulatory proteins. MED1 interacts directly with MED4 and MED7. SRB2/MED20 interacts directly with SRB4/MED17 and SRB5/MED18.

The protein resides in the nucleus. Functionally, component of the Mediator complex, a coactivator involved in the regulated transcription of nearly all RNA polymerase II-dependent genes. Mediator functions as a bridge to convey information from gene-specific regulatory proteins to the basal RNA polymerase II transcription machinery. The Mediator complex, having a compact conformation in its free form, is recruited to promoters by direct interactions with regulatory proteins and serves for the assembly of a functional preinitiation complex with RNA polymerase II and the general transcription factors. The Mediator complex unfolds to an extended conformation and partially surrounds RNA polymerase II, specifically interacting with the unphosphorylated form of the C-terminal domain (CTD) of RNA polymerase II. The Mediator complex dissociates from the RNA polymerase II holoenzyme and stays at the promoter when transcriptional elongation begins. This is Mediator of RNA polymerase II transcription subunit 20 (SRB2) from Saccharomyces cerevisiae (strain ATCC 204508 / S288c) (Baker's yeast).